The primary structure comprises 300 residues: Cation-efflux pump FieF (300 aa).

4 helical membrane passes run 12–32, 39–59, 82–102, and 114–134; these read AAIAATAMASLLLLIKIFAWW, ILAALVDSLVDIGASLTNLLV, AALAQSMFISGSALFLFLTGI, and PGVGVIVTIVALICTIILVSF. The Zn(2+) site is built by Asp45 and Asp49. His153 and Asp157 together coordinate Zn(2+). The next 2 membrane-spanning stretches (helical) occupy residues 156–176 and 178–198; these read SDVMMNGAILLALGLSWYGWH and ADALFALGIGIYILYSALRMG.

Belongs to the cation diffusion facilitator (CDF) transporter (TC 2.A.4) family. FieF subfamily. As to quaternary structure, homodimer.

It localises to the cell inner membrane. The enzyme catalyses Zn(2+)(in) + H(+)(out) = Zn(2+)(out) + H(+)(in). It carries out the reaction Cd(2+)(in) + H(+)(out) = Cd(2+)(out) + H(+)(in). The catalysed reaction is Fe(2+)(in) + H(+)(out) = Fe(2+)(out) + H(+)(in). Its function is as follows. Divalent metal cation transporter which exports Zn(2+), Cd(2+) and possibly Fe(2+). May be involved in zinc and iron detoxification by efflux. This Shigella boydii serotype 18 (strain CDC 3083-94 / BS512) protein is Cation-efflux pump FieF.